The primary structure comprises 361 residues: S-adenosylmethionine:tRNA ribosyltransferase-isomerase (361 aa).

The protein belongs to the QueA family. In terms of assembly, monomer.

It is found in the cytoplasm. The enzyme catalyses 7-aminomethyl-7-carbaguanosine(34) in tRNA + S-adenosyl-L-methionine = epoxyqueuosine(34) in tRNA + adenine + L-methionine + 2 H(+). Its pathway is tRNA modification; tRNA-queuosine biosynthesis. In terms of biological role, transfers and isomerizes the ribose moiety from AdoMet to the 7-aminomethyl group of 7-deazaguanine (preQ1-tRNA) to give epoxyqueuosine (oQ-tRNA). This chain is S-adenosylmethionine:tRNA ribosyltransferase-isomerase, found in Glaesserella parasuis serovar 5 (strain SH0165) (Haemophilus parasuis).